Here is a 75-residue protein sequence, read N- to C-terminus: Pi-hexatoxin-Hi1b (75 aa).

Intrachain disulfides connect Cys3–Cys18, Cys10–Cys23, Cys17–Cys33, Cys40–Cys55, Cys47–Cys60, and Cys54–Cys71. Domain repeat units follow at residues 3-33 (CIRK…FEVC) and 40-71 (CLVK…SSVC). Positions 3–71 (CIRKWLSCVD…KRSGNKSSVC (69 aa)) are 2 X approximate repeats with cysteine pattern C-C-CC-C-C.

It belongs to the psalmotoxin-1 family. Double-knot toxin subfamily. As to expression, expressed by the venom gland.

It localises to the secreted. This toxin potently and selectively inhibits ASIC1a, an isoform of the gene ASIC1. It incompletely inhibits ASIC1a activation in a pH-independent and slowly reversible manner. This toxin acts by binding to and stabilizing the closed state of the channel, thereby impeding the transition into a conducting state. This toxin may bind to the acidic pocket of ASIC1a, since mutation of a key residue of this pocket (Arg-350) abolishes the ability of the toxin to inhibit ASIC1a. In vivo, this toxin protects the brain from neuronal injury when administered up to 8 hours after stroke onset. The polypeptide is Pi-hexatoxin-Hi1b (Hadronyche infensa (Fraser island funnel-web spider)).